Consider the following 451-residue polypeptide: Porin AaxA (451 aa).

An N-terminal signal peptide occupies residues 1-27 (MASFHSSLLTALCTLCTYGILTMPAYG).

The protein belongs to the OprB family.

It is found in the cell outer membrane. Functionally, facilitates L-arginine uptake, as part of the AaxABC system. The arginine uptake by the bacterium in the macrophage may be a virulence factor against the host innate immune response. The protein is Porin AaxA (aaxA) of Chlamydia caviae (strain ATCC VR-813 / DSM 19441 / 03DC25 / GPIC) (Chlamydophila caviae).